Here is a 298-residue protein sequence, read N- to C-terminus: Probable endonuclease 4 (298 aa).

The Zn(2+) site is built by histidine 69, histidine 111, glutamate 146, aspartate 180, histidine 183, histidine 215, aspartate 228, histidine 230, and glutamate 260.

The protein belongs to the AP endonuclease 2 family. Zn(2+) is required as a cofactor.

The catalysed reaction is Endonucleolytic cleavage to 5'-phosphooligonucleotide end-products.. Endonuclease IV plays a role in DNA repair. It cleaves phosphodiester bonds at apurinic or apyrimidinic (AP) sites, generating a 3'-hydroxyl group and a 5'-terminal sugar phosphate. The chain is Probable endonuclease 4 from Bacillus cereus (strain 03BB102).